A 140-amino-acid chain; its full sequence is MKFLAVVSLLAATALALPNAGVVHPTFASADKYTLQQAQNKCGEHTTLSCCNHVSKVGDTTAFNYGLLNGLLGNAISGPEGVGILSGCQKISVTALIGVDDLLNKQCQQNVACCQDNKSVATGGLINIATPACVALDSII.

The N-terminal stretch at 1 to 16 (MKFLAVVSLLAATALA) is a signal peptide. Intrachain disulfides connect cysteine 42–cysteine 113, cysteine 50–cysteine 107, cysteine 51–cysteine 88, and cysteine 114–cysteine 133. N-linked (GlcNAc...) asparagine glycosylation occurs at asparagine 117.

This sequence belongs to the fungal hydrophobin family. In terms of assembly, self-assembles to form functional amyloid fibrils called rodlets. Self-assembly into fibrillar rodlets occurs spontaneously at hydrophobic:hydrophilic interfaces and the rodlets further associate laterally to form amphipathic monolayers.

It is found in the secreted. The protein resides in the spore wall. In terms of biological role, aerial growth, conidiation, and dispersal of filamentous fungi in the environment rely upon a capability of their secreting small amphipathic proteins called hydrophobins (HPBs) with low sequence identity. Class I can self-assemble into an outermost layer of rodlet bundles on aerial cell surfaces, conferring cellular hydrophobicity that supports fungal growth, development and dispersal; whereas Class II form highly ordered films at water-air interfaces through intermolecular interactions but contribute nothing to the rodlet structure. RodB is a class I hydrophobin that, unlike rodA, is not required for rodlet formation. The chain is Class I hydrophobin B from Aspergillus fumigatus (strain ATCC MYA-4609 / CBS 101355 / FGSC A1100 / Af293) (Neosartorya fumigata).